Reading from the N-terminus, the 1047-residue chain is Helicase-like transcription factor CHR27 (1047 aa).

Residues Met1 to Ser11 are compositionally biased toward low complexity. 3 disordered regions span residues Met1–Gly89, Arg103–Arg130, and Lys145–Phe174. Composition is skewed to polar residues over residues Thr52 to Ser88 and Ser118 to Gly128. A Helicase ATP-binding domain is found at Glu296–Asp597. Residue Asp309–Thr316 participates in ATP binding. Disordered stretches follow at residues Ala349–Phe407 and Val511–Asp533. Residues Asp354–Leu368 show a composition bias toward basic and acidic residues. The segment covering Val370 to Leu379 has biased composition (polar residues). Acidic residues predominate over residues Asp385–Ala400. Positions Val511 to Lys523 are enriched in basic residues. The segment at Cys751 to Arg790 adopts an RING-type; degenerate zinc-finger fold. Residues Gln851–Arg868 are compositionally biased toward polar residues. The tract at residues Gln851–Asp873 is disordered. The 156-residue stretch at Ser887–Lys1042 folds into the Helicase C-terminal domain.

The protein belongs to the SNF2/RAD54 helicase family. RAD16 subfamily. Interacts with SUVR2. Interacts with itself.

The protein localises to the nucleus. Functionally, probable helicase-like transcription factor involved in transcriptional gene silencing. Associates with SUVR2 and contributes to transcriptional gene silencing at RNA-directed DNA methylation (RdDM) target loci but also at RdDM-independent target loci. May be involved in nucleosome positioning to form ordered nucleosome arrays on chromatin. Associates with SUVR2 and functions redundantly with FRG2. Required for the efficient methylation of a broad range of RdDM target loci. This Arabidopsis thaliana (Mouse-ear cress) protein is Helicase-like transcription factor CHR27.